Consider the following 309-residue polypeptide: Serine/threonine-protein phosphatase PP2A catalytic subunit (309 aa).

4 residues coordinate Mn(2+): aspartate 57, histidine 59, aspartate 85, and asparagine 117. Histidine 118 serves as the catalytic Proton donor. Residues histidine 167 and histidine 241 each contribute to the Mn(2+) site.

This sequence belongs to the PPP phosphatase family. PP-2A subfamily. It depends on Mn(2+) as a cofactor.

It carries out the reaction O-phospho-L-seryl-[protein] + H2O = L-seryl-[protein] + phosphate. The enzyme catalyses O-phospho-L-threonyl-[protein] + H2O = L-threonyl-[protein] + phosphate. This is Serine/threonine-protein phosphatase PP2A catalytic subunit from Brassica napus (Rape).